Consider the following 132-residue polypeptide: Small ribosomal subunit protein uS8 (132 aa).

Belongs to the universal ribosomal protein uS8 family. In terms of assembly, part of the 30S ribosomal subunit. Contacts proteins S5 and S12.

In terms of biological role, one of the primary rRNA binding proteins, it binds directly to 16S rRNA central domain where it helps coordinate assembly of the platform of the 30S subunit. This is Small ribosomal subunit protein uS8 from Rickettsia massiliae (strain Mtu5).